The following is a 156-amino-acid chain: Ecotin (156 aa).

The first 19 residues, 1–19 (MKALLIAAGVAALSSTAMA), serve as a signal peptide directing secretion. Cys-65 and Cys-102 are disulfide-bonded.

This sequence belongs to the protease inhibitor I11 (ecotin) family. Homodimer.

The protein localises to the periplasm. General inhibitor of family S1 serine proteases. The protein is Ecotin of Pseudomonas aeruginosa (strain LESB58).